Consider the following 98-residue polypeptide: Large ribosomal subunit protein uL23 (98 aa).

Belongs to the universal ribosomal protein uL23 family. As to quaternary structure, part of the 50S ribosomal subunit. Contacts protein L29, and trigger factor when it is bound to the ribosome.

One of the early assembly proteins it binds 23S rRNA. One of the proteins that surrounds the polypeptide exit tunnel on the outside of the ribosome. Forms the main docking site for trigger factor binding to the ribosome. This Ruegeria pomeroyi (strain ATCC 700808 / DSM 15171 / DSS-3) (Silicibacter pomeroyi) protein is Large ribosomal subunit protein uL23.